A 354-amino-acid chain; its full sequence is Histidinol-phosphate aminotransferase (354 aa).

Lys-210 carries the post-translational modification N6-(pyridoxal phosphate)lysine.

It belongs to the class-II pyridoxal-phosphate-dependent aminotransferase family. Histidinol-phosphate aminotransferase subfamily. In terms of assembly, homodimer. Pyridoxal 5'-phosphate is required as a cofactor.

The enzyme catalyses L-histidinol phosphate + 2-oxoglutarate = 3-(imidazol-4-yl)-2-oxopropyl phosphate + L-glutamate. It participates in amino-acid biosynthesis; L-histidine biosynthesis; L-histidine from 5-phospho-alpha-D-ribose 1-diphosphate: step 7/9. This chain is Histidinol-phosphate aminotransferase, found in Clostridium botulinum (strain 657 / Type Ba4).